The following is a 463-amino-acid chain: Argininosuccinate lyase (463 aa).

The protein belongs to the lyase 1 family. Argininosuccinate lyase subfamily.

The protein resides in the cytoplasm. It carries out the reaction 2-(N(omega)-L-arginino)succinate = fumarate + L-arginine. It functions in the pathway amino-acid biosynthesis; L-arginine biosynthesis; L-arginine from L-ornithine and carbamoyl phosphate: step 3/3. This is Argininosuccinate lyase from Thiobacillus denitrificans (strain ATCC 25259 / T1).